The following is a 329-amino-acid chain: Sulfate-binding protein (329 aa).

The N-terminal stretch at 1-19 (MNKWGVGLTFLLAATSVMA) is a signal peptide.

It belongs to the prokaryotic sulfate-binding protein family.

The protein localises to the periplasm. Functionally, this protein specifically binds sulfate and is involved in its transmembrane transport. This chain is Sulfate-binding protein (sbp), found in Escherichia coli (strain K12).